A 250-amino-acid polypeptide reads, in one-letter code: N-acyl homoserine lactonase (250 aa).

Zn(2+)-binding residues include His-104, His-106, Asp-108, His-109, His-169, Asp-191, and His-235.

It belongs to the metallo-beta-lactamase superfamily. Monomer. The cofactor is Zn(2+).

The enzyme catalyses an N-acyl-L-homoserine lactone + H2O = an N-acyl-L-homoserine + H(+). Its activity is regulated as follows. Completely inhibited by Cu(2+) and Ag(+). Partially inhibited by Cr(2+), Pb(2+) and Fe(2+). Mg(2+), Ca(2+), Mn(2+), Co(2+), Ni(2+), Zn(2+) and Cd(2+) have no effect on activity. The chelating agents EDTA, 2,2'bipyridine and o-phenanthroline have no effect on enzyme activity. Functionally, hydrolyzes acyl homoserine lactones with varying lengths of acyl chains, with a slight preference for substrates without 3-oxo substitution at the C3 position. Has only residual activity towards non-acyl lactones, and no activity towards non-cyclic esters. The protein is N-acyl homoserine lactonase of Bacillus sp.